Reading from the N-terminus, the 741-residue chain is Pentatricopeptide repeat-containing protein At3g58590 (741 aa).

PPR repeat units follow at residues 48-78, 79-113, 114-146, 148-178, 179-213, 214-248, 249-279, 280-314, 315-349, 350-380, 381-414, 415-445, 446-481, 483-508, 509-543, 544-578, 580-610, 611-645, 646-680, and 681-715; these read PVYVCNNIISLYEKLGEVSLAGKVFDQMPER, NKVSFNTIIKGYSKYGDVDKAWGVFSEMRYFGYLP, NQSTVSGLLSCASLDVRAGTQLHGLSLKYGLFM, DAFVGTCLLCLYGRLDLLEMAEQVFEDMPFK, SLETWNHMMSLLGHRGFLKECMFFFRELVRMGASL, TESSFLGVLKGVSCVKDLDISKQLHCSATKKGLDC, EISVVNSLISAYGKCGNTHMAERMFQDAGSW, DIVSWNAIICATAKSENPLKALKLFVSMPEHGFSP, NQGTYVSVLGVSSLVQLLSCGRQIHGMLIKNGCET, GIVLGNALIDFYAKCGNLEDSRLCFDYIRDK, NIVCWNALLSGYANKDGPICLSLFLQMLQMGFRP, TEYTFSTALKSCCVTELQQLHSVIVRMGYED, NDYVLSSLMRSYAKNQLMNDALLLLDWASGPTSVVP, NIVAGIYSRRGQYHESVKLISTLEQP, DTVSWNIAIAACSRSDYHEEVIELFKHMLQSNIRP, DKYTFVSILSLCSKLCDLTLGSSIHGLITKTDFSC, DTFVCNVLIDMYGKCGSIRSVMKVFEETREK, NLITWTALISCLGIHGYGQEALEKFKETLSLGFKP, DRVSFISILTACRHGGMVKEGMGLFQKMKDYGVEP, and EMDHYRCAVDLLARNGYLKEAEHLIREMPFPADAP.

It belongs to the PPR family. P subfamily.

This chain is Pentatricopeptide repeat-containing protein At3g58590, found in Arabidopsis thaliana (Mouse-ear cress).